A 909-amino-acid polypeptide reads, in one-letter code: Protein translocase subunit SecA (909 aa).

ATP-binding positions include Q87, 105 to 109 (GEGKT), and D512. Positions 863-909 (LVGGGDEDDESIAAHTPMIRDGDKVGRNDPCPCGSGRKYKQCHGKLS) are disordered. Over residues 880–889 (MIRDGDKVGR) the composition is skewed to basic and acidic residues. Zn(2+) is bound by residues C893, C895, C904, and H905. The span at 899–909 (RKYKQCHGKLS) shows a compositional bias: basic residues.

It belongs to the SecA family. Monomer and homodimer. Part of the essential Sec protein translocation apparatus which comprises SecA, SecYEG and auxiliary proteins SecDF-YajC and YidC. The cofactor is Zn(2+).

It is found in the cell inner membrane. It localises to the cytoplasm. The catalysed reaction is ATP + H2O + cellular proteinSide 1 = ADP + phosphate + cellular proteinSide 2.. Functionally, part of the Sec protein translocase complex. Interacts with the SecYEG preprotein conducting channel. Has a central role in coupling the hydrolysis of ATP to the transfer of proteins into and across the cell membrane, serving both as a receptor for the preprotein-SecB complex and as an ATP-driven molecular motor driving the stepwise translocation of polypeptide chains across the membrane. This is Protein translocase subunit SecA from Shewanella putrefaciens (strain CN-32 / ATCC BAA-453).